A 218-amino-acid chain; its full sequence is Cytochrome c biogenesis ATP-binding export protein CcmA (218 aa).

The ABC transporter domain occupies Leu2–Val217. Residue Gly34–Thr41 coordinates ATP.

The protein belongs to the ABC transporter superfamily. CcmA exporter (TC 3.A.1.107) family. In terms of assembly, the complex is composed of two ATP-binding proteins (CcmA) and two transmembrane proteins (CcmB).

Its subcellular location is the cell inner membrane. The enzyme catalyses heme b(in) + ATP + H2O = heme b(out) + ADP + phosphate + H(+). Functionally, part of the ABC transporter complex CcmAB involved in the biogenesis of c-type cytochromes; once thought to export heme, this seems not to be the case, but its exact role is uncertain. Responsible for energy coupling to the transport system. The sequence is that of Cytochrome c biogenesis ATP-binding export protein CcmA from Yersinia pseudotuberculosis serotype I (strain IP32953).